Consider the following 34-residue polypeptide: Photosystem II reaction center protein M (34 aa).

Residues 5 to 25 (ILAFIATALFILIPTAFSLIL) form a helical membrane-spanning segment.

Belongs to the PsbM family. As to quaternary structure, PSII is composed of 1 copy each of membrane proteins PsbA, PsbB, PsbC, PsbD, PsbE, PsbF, PsbH, PsbI, PsbJ, PsbK, PsbL, PsbM, PsbT, PsbX, PsbY, PsbZ, Psb30/Ycf12, at least 3 peripheral proteins of the oxygen-evolving complex and a large number of cofactors. It forms dimeric complexes.

Its subcellular location is the plastid. The protein resides in the chloroplast thylakoid membrane. In terms of biological role, one of the components of the core complex of photosystem II (PSII). PSII is a light-driven water:plastoquinone oxidoreductase that uses light energy to abstract electrons from H(2)O, generating O(2) and a proton gradient subsequently used for ATP formation. It consists of a core antenna complex that captures photons, and an electron transfer chain that converts photonic excitation into a charge separation. This subunit is found at the monomer-monomer interface. The polypeptide is Photosystem II reaction center protein M (Huperzia lucidula (Shining clubmoss)).